The primary structure comprises 399 residues: Fe-coproporphyrin III synthase (399 aa).

Residues 36–253 (KDKKPVVVWN…TRKLHEKGFP (218 aa)) form the Radical SAM core domain. 3 residues coordinate [4Fe-4S] cluster: Cys50, Cys54, and Cys57.

This sequence belongs to the radical SAM superfamily. [4Fe-4S] cluster serves as cofactor.

It catalyses the reaction 12,18-didecarboxysiroheme + 2 AH2 + 2 S-adenosyl-L-methionine = Fe-coproporphyrin III + 2 5'-deoxyadenosine + 2 L-methionine + 2 acetate + 2 A + 2 H(+). The protein operates within porphyrin-containing compound metabolism; protoheme biosynthesis. In terms of biological role, involved in siroheme-dependent heme b biosynthesis. Catalyzes the conversion of didecarboxysiroheme into Fe-coproporphyrin III by oxidative loss of two acetic acid side chains. In Methanosarcina barkeri (strain Fusaro / DSM 804), this protein is Fe-coproporphyrin III synthase.